The sequence spans 259 residues: TCF3 fusion partner homolog (259 aa).

2 disordered regions span residues 51–72 and 141–210; these read GLGD…GRRR and EDDG…APVQ. Ser167 carries the post-translational modification Phosphoserine. Thr172 carries the post-translational modification Phosphothreonine. Ser180 and Ser188 each carry phosphoserine. Position 203 is a phosphothreonine (Thr203). A Glycyl lysine isopeptide (Lys-Gly) (interchain with G-Cter in SUMO2) cross-link involves residue Lys222. The tract at residues 240–259 is disordered; that stretch reads VSRGPDKLLPYPTLASPPFD. Ser255 is modified (phosphoserine).

Interacts with NOL3; translocates NOL3 into the nucleus and negatively regulated TFPT-induced cell death. Component of the chromatin remodeling INO80 complex; specifically part of a complex module associated with the N-terminus of INO80. In terms of tissue distribution, ubiquitously expressed. Abundant in the brain.

The protein localises to the nucleus. Its function is as follows. Appears to promote apoptosis in a p53/TP53-independent manner. In terms of biological role, putative regulatory component of the chromatin remodeling INO80 complex which is involved in transcriptional regulation, DNA replication and probably DNA repair. This Rattus norvegicus (Rat) protein is TCF3 fusion partner homolog (Tfpt).